The chain runs to 403 residues: Keratin, type I cytoskeletal 19 (403 aa).

A head region spans residues 1–82; the sequence is MTSYSYRQSS…TVTDGLLGGN (82 aa). An Omega-N-methylarginine modification is found at arginine 7. Residue serine 14 is modified to Phosphoserine. The residue at position 24 (arginine 24) is an Asymmetric dimethylarginine; alternate. Residue arginine 24 is modified to Omega-N-methylarginine; alternate. Serine 27 carries the phosphoserine modification. The residue at position 32 (arginine 32) is an Omega-N-methylarginine. Residues serine 35 and serine 40 each carry the phosphoserine modification. An omega-N-methylarginine mark is found at arginine 43 and arginine 51. A phosphoserine mark is found at serine 57 and serine 67. The coil 1A stretch occupies residues 83–118; it reads EKITMQNLNDRLASYLDKVRALEQANGELEVKIRDW. In terms of domain architecture, IF rod spans 83–394; sequence EKITMQNLND…SLLEGQEAHY (312 aa). Positions 119-136 are linker 1; that stretch reads YQKQGPGPFRDYSQYFKT. The segment at 137 to 228 is coil 1B; sequence IEDLRDKILG…KNHEEEISAL (92 aa). The segment at 229-251 is linker 12; that stretch reads RSQVGGQVSVEVDSTPGIDLAKI. Positions 247 to 393 are necessary for interaction with PNN; it reads DLAKILSEMR…RSLLEGQEAH (147 aa). The coil 2 stretch occupies residues 252–390; it reads LSEMRSQYEA…ATYRSLLEGQ (139 aa). Threonine 326 bears the Phosphothreonine mark. Residues 391–403 are rod-like helical tail; that stretch reads EAHYNSLSIAKAL. Tyrosine 394 is subject to Phosphotyrosine. Serine 398 bears the Phosphoserine mark.

It belongs to the intermediate filament family. As to quaternary structure, heterotetramer of two type I and two type II keratins. Interacts with PNN. Interacts with the actin-binding domain of DMD. In terms of tissue distribution, expressed in brain, heart, skin and in costameres of myoplasm at the sarcolemmal membrane in skeletal and cardiac muscle fibers. Undifferentiated gonads and somatic cells of ovarian cords throughout the fetal ovary development.

In terms of biological role, involved in the organization of myofibers. Together with KRT8, helps to link the contractile apparatus to dystrophin at the costameres of striated muscle. The polypeptide is Keratin, type I cytoskeletal 19 (Krt19) (Rattus norvegicus (Rat)).